Consider the following 159-residue polypeptide: Serine-protein kinase RsbW (159 aa).

It belongs to the anti-sigma-factor family.

It carries out the reaction L-seryl-[protein] + ATP = O-phospho-L-seryl-[protein] + ADP + H(+). It catalyses the reaction L-threonyl-[protein] + ATP = O-phospho-L-threonyl-[protein] + ADP + H(+). Functionally, negative regulator of sigma-B activity. Phosphorylates and inactivates its specific antagonist protein, RsbV. Upon phosphorylation of RsbV, RsbW is released and binds to sigma-B, thereby blocking its ability to form an RNA polymerase holoenzyme (E-sigma-B). The chain is Serine-protein kinase RsbW from Staphylococcus aureus (strain Newman).